We begin with the raw amino-acid sequence, 204 residues long: Inactive ribonuclease-like protein 9 (204 aa).

Positions 1-26 (MMRTLITTHPLLLLLLLQQLLQPVQL) are cleaved as a signal peptide. Disulfide bonds link C97–C152, C115–C167, and C122–C129. N-linked (GlcNAc...) asparagine glycans are attached at residues N130 and N142.

Belongs to the pancreatic ribonuclease family.

It is found in the secreted. In terms of biological role, does not exhibit any ribonuclease activity. The sequence is that of Inactive ribonuclease-like protein 9 (RNASE9) from Chlorocebus aethiops (Green monkey).